The primary structure comprises 218 residues: Small ribosomal subunit protein uS3c (218 aa).

Residues 47 to 117 (VRTHIRNSSN…KLKITLSEID (71 aa)) enclose the KH type-2 domain.

This sequence belongs to the universal ribosomal protein uS3 family. In terms of assembly, part of the 30S ribosomal subunit.

It localises to the plastid. It is found in the chloroplast. The protein is Small ribosomal subunit protein uS3c (rps3) of Spirogyra maxima (Green alga).